Here is a 30-residue protein sequence, read N- to C-terminus: rRNA N-glycosylase (30 aa).

Belongs to the ribosome-inactivating protein family. Type 1 RIP subfamily. Expressed in seeds.

It catalyses the reaction Endohydrolysis of the N-glycosidic bond at one specific adenosine on the 28S rRNA.. In terms of biological role, exhibits N-glycosylase activity. Catalyzes the release of one adenine from a ribosome. Acts as a ribosome-inactivating protein and inhibits protein synthesis in a rabbit-reticulocyte lysate system and in various cell lines (in vitro). In Saponaria ocymoides (Rock soapwort), this protein is rRNA N-glycosylase.